The sequence spans 704 residues: Protein cueball (704 aa).

The first 26 residues, 1 to 26 (MKSPCRAAAGWLVLLLSSCCLGYVIA), serve as a signal peptide directing secretion. Over 27–594 (TEWAAAVTTD…TYCKESFNRT (568 aa)) the chain is Extracellular. LDL-receptor class B repeat units follow at residues 69–119 (GKLY…DHLE), 120–166 (RRLY…EATT), 199–242 (RHLY…DHYR), and 243–288 (NRLY…KNDY). N-linked (GlcNAc...) asparagine glycosylation is found at Asn152 and Asn219. EGF-like domains are found at residues 363 to 397 (TQQQ…KLCE), 432 to 478 (DRNR…ARCE), and 514 to 551 (EEYS…QRCE). 8 disulfides stabilise this stretch: Cys372/Cys385, Cys387/Cys396, Cys436/Cys446, Cys440/Cys465, Cys467/Cys477, Cys518/Cys528, Cys522/Cys539, and Cys541/Cys550. A glycan (N-linked (GlcNAc...) asparagine) is linked at Asn375. Asn450 carries an N-linked (GlcNAc...) asparagine glycan. Asn532 carries N-linked (GlcNAc...) asparagine glycosylation. Asn592 carries an N-linked (GlcNAc...) asparagine glycan. Residues 595-615 (VVYTSLCFTVSFALLLAVVLV) form a helical membrane-spanning segment. The Cytoplasmic segment spans residues 616–704 (VSRMMKPPRP…NCGDGTAERK (89 aa)).

The protein belongs to the cueball family.

It is found in the cell membrane. Its function is as follows. Has a role in spermatogenesis and oogenesis. This chain is Protein cueball, found in Anopheles gambiae (African malaria mosquito).